The primary structure comprises 588 residues: DNA mismatch repair protein MutL (588 aa).

The protein belongs to the DNA mismatch repair MutL/HexB family.

This protein is involved in the repair of mismatches in DNA. It is required for dam-dependent methyl-directed DNA mismatch repair. May act as a 'molecular matchmaker', a protein that promotes the formation of a stable complex between two or more DNA-binding proteins in an ATP-dependent manner without itself being part of a final effector complex. This Methanocorpusculum labreanum (strain ATCC 43576 / DSM 4855 / Z) protein is DNA mismatch repair protein MutL.